A 463-amino-acid polypeptide reads, in one-letter code: DNA-binding protein K10 (463 aa).

Over residues 1–13 (MVSKNQFYQNWTM) the composition is skewed to polar residues. The interval 1–304 (MVSKNQFYQN…RNGPGPGPMM (304 aa)) is disordered. Low complexity predominate over residues 14–50 (QSQQQHPHQMQQQFQQQQQPNLQHRNNQSNNNNCNNN). Residues 85–94 (QMMFSSSQMP) are compositionally biased toward polar residues. Repeat copies occupy residues 87–94 (MFSSSQMP), 95–102 (SDPLYIDF), 103–110 (SSPPPGFK), 111–118 (HNQVGSPK), 119–126 (KKSMKGIK), 127–134 (QQQHPSPN), and 135–142 (QQQPPSPN). The segment at 87 to 142 (MFSSSQMPSDPLYIDFSSPPPGFKHNQVGSPKKKSMKGIKQQQHPSPNQQQPPSPN) is 7 X approximate tandem repeats. Positions 142–193 (NQQQHPSPNQQQHPSPNQQQHPNSNQQQHLSPNQQQGKMNNQNNNHMNQSQQ) are enriched in low complexity. Over residues 194 to 214 (PFNNQMNGSDWQRHPGNNPNQ) the composition is skewed to polar residues. 2 stretches are compositionally biased toward pro residues: residues 225-270 (GPPP…PPVP) and 282-291 (GGPPPPPPPL). Residues 397–416 (DELFAQYKGQRDKFVSLYEA) constitute a DNA-binding region (H-T-H motif). Residues 426-463 (AATVKAKDAKSDKDKNAISSQSAAPKAGSAKDATIPNP) are disordered. The segment covering 430 to 441 (KAKDAKSDKDKN) has biased composition (basic and acidic residues).

As to quaternary structure, interacts (via N-terminus) with sqd; the interaction is direct and may be involved in localization of sqd to the oocyte during oogenesis.

It is found in the nucleus. In terms of biological role, may be involved in localization of sqd to the oocyte during oogenesis. This chain is DNA-binding protein K10 (fs(1)K10), found in Drosophila melanogaster (Fruit fly).